Here is a 34-residue protein sequence, read N- to C-terminus: Mu-theraphotoxin-CCy1a (34 aa).

3 disulfides stabilise this stretch: C3-C18, C10-C23, and C17-C30.

This sequence belongs to the neurotoxin 10 (Hwtx-1) family. 14 (Hntx-1) subfamily. Expressed by the venom gland.

It is found in the secreted. Voltage-gated sodium channel Nav1.7/SCN9A inhibitor. In Chromatopelma cyaneopubescens (Greenbottle blue tarantula), this protein is Mu-theraphotoxin-CCy1a.